Reading from the N-terminus, the 227-residue chain is Ribosomal RNA large subunit methyltransferase E (227 aa).

S-adenosyl-L-methionine contacts are provided by glycine 78, tryptophan 80, aspartate 103, aspartate 119, and aspartate 143. Catalysis depends on lysine 183, which acts as the Proton acceptor.

This sequence belongs to the class I-like SAM-binding methyltransferase superfamily. RNA methyltransferase RlmE family.

Its subcellular location is the cytoplasm. The catalysed reaction is uridine(2552) in 23S rRNA + S-adenosyl-L-methionine = 2'-O-methyluridine(2552) in 23S rRNA + S-adenosyl-L-homocysteine + H(+). In terms of biological role, specifically methylates the uridine in position 2552 of 23S rRNA at the 2'-O position of the ribose in the fully assembled 50S ribosomal subunit. The polypeptide is Ribosomal RNA large subunit methyltransferase E (Rickettsia typhi (strain ATCC VR-144 / Wilmington)).